A 622-amino-acid chain; its full sequence is Intermediate filament protein ifc-2 (622 aa).

Residues 19 to 54 form a head region; that stretch reads SGTYASGFGQLVSGMSSAGAICTTQIRDAREREKRE. The 349-residue stretch at 51-399 folds into the IF rod domain; it reads EKREIGLLND…ILLNGANVTT (349 aa). The tract at residues 55-86 is coil 1A; it reads IGLLNDRLADYIEKVRFLEAQNRCLSHDIDIL. The tract at residues 87–99 is linker 1; that stretch reads RNGFSGGGHVSGL. Residues 100-237 are coil 1B; that stretch reads FDAEINQAKH…TENNVRIEQE (138 aa). Residues 238 to 255 form a linker 12 region; that stretch reads LVFIRRDTTADNRDYFRH. Residues 256–399 form a coil 2 region; that stretch reads ELQAAIRDIR…ILLNGANVTT (144 aa). A tail region spans residues 400-550; it reads YTSNTHGSGS…RVDVGGFRIE (151 aa). Positions 509–622 constitute an LTD domain; that stretch reads SGRHFHSWYL…EERAWFVYLD (114 aa).

The protein belongs to the intermediate filament family. As to expression, expressed in intestinal cells and at desmosomes in intestine and pharynx of the larva.

The protein resides in the cytoplasm. Cytoplasmic intermediate filaments provide mechanical strength to cells. Not essential protein, although its absence leads to mild defects in locomotion. This Caenorhabditis elegans protein is Intermediate filament protein ifc-2 (ifc-2).